A 353-amino-acid chain; its full sequence is Photosystem II protein D1 (353 aa).

Thr-2 is modified (N-acetylthreonine). The residue at position 2 (Thr-2) is a Phosphothreonine. A run of 3 helical transmembrane segments spans residues 29–46 (YIGW…TATS), 118–133 (HFLL…EWEL), and 142–156 (WIAV…AAAA). Position 118 (His-118) interacts with chlorophyll a. A pheophytin a-binding site is contributed by Tyr-126. Residues Asp-170 and Glu-189 each contribute to the [CaMn4O5] cluster site. The helical transmembrane segment at 197–218 (FHMLGVAGVFGGSLFSAMHGSL) threads the bilayer. His-198 is a binding site for chlorophyll a. Residues His-215 and 264-265 (SF) each bind a quinone. His-215 is a binding site for Fe cation. His-272 contacts Fe cation. The helical transmembrane segment at 274–288 (FLAAWPVVGIWFTAL) threads the bilayer. Residues His-332, Glu-333, Asp-342, and Ala-344 each contribute to the [CaMn4O5] cluster site. A propeptide spanning residues 345–353 (SVEAPSVKA) is cleaved from the precursor.

Belongs to the reaction center PufL/M/PsbA/D family. In terms of assembly, PSII is composed of 1 copy each of membrane proteins PsbA, PsbB, PsbC, PsbD, PsbE, PsbF, PsbH, PsbI, PsbJ, PsbK, PsbL, PsbM, PsbT, PsbX, PsbY, PsbZ, Psb30/Ycf12, at least 3 peripheral proteins of the oxygen-evolving complex and a large number of cofactors. It forms dimeric complexes. The cofactor is The D1/D2 heterodimer binds P680, chlorophylls that are the primary electron donor of PSII, and subsequent electron acceptors. It shares a non-heme iron and each subunit binds pheophytin, quinone, additional chlorophylls, carotenoids and lipids. D1 provides most of the ligands for the Mn4-Ca-O5 cluster of the oxygen-evolving complex (OEC). There is also a Cl(-1) ion associated with D1 and D2, which is required for oxygen evolution. The PSII complex binds additional chlorophylls, carotenoids and specific lipids.. Post-translationally, tyr-161 forms a radical intermediate that is referred to as redox-active TyrZ, YZ or Y-Z. In terms of processing, C-terminally processed by CTPA; processing is essential to allow assembly of the oxygen-evolving complex and thus photosynthetic growth.

It localises to the plastid. The protein localises to the chloroplast thylakoid membrane. It catalyses the reaction 2 a plastoquinone + 4 hnu + 2 H2O = 2 a plastoquinol + O2. Functionally, photosystem II (PSII) is a light-driven water:plastoquinone oxidoreductase that uses light energy to abstract electrons from H(2)O, generating O(2) and a proton gradient subsequently used for ATP formation. It consists of a core antenna complex that captures photons, and an electron transfer chain that converts photonic excitation into a charge separation. The D1/D2 (PsbA/PsbD) reaction center heterodimer binds P680, the primary electron donor of PSII as well as several subsequent electron acceptors. The protein is Photosystem II protein D1 of Angiopteris evecta (Mule's foot fern).